Here is a 121-residue protein sequence, read N- to C-terminus: Large ribosomal subunit protein bL12 (121 aa).

Belongs to the bacterial ribosomal protein bL12 family. As to quaternary structure, homodimer. Part of the ribosomal stalk of the 50S ribosomal subunit. Forms a multimeric L10(L12)X complex, where L10 forms an elongated spine to which 2 to 4 L12 dimers bind in a sequential fashion. Binds GTP-bound translation factors.

In terms of biological role, forms part of the ribosomal stalk which helps the ribosome interact with GTP-bound translation factors. Is thus essential for accurate translation. This Streptococcus equi subsp. equi (strain 4047) protein is Large ribosomal subunit protein bL12.